A 322-amino-acid polypeptide reads, in one-letter code: tRNA U34 carboxymethyltransferase (322 aa).

Residues K91, W105, K110, G129, 179–180 (LE), M195, Y199, and R314 each bind carboxy-S-adenosyl-L-methionine.

Belongs to the class I-like SAM-binding methyltransferase superfamily. CmoB family. In terms of assembly, homotetramer.

The catalysed reaction is carboxy-S-adenosyl-L-methionine + 5-hydroxyuridine(34) in tRNA = 5-carboxymethoxyuridine(34) in tRNA + S-adenosyl-L-homocysteine + H(+). Functionally, catalyzes carboxymethyl transfer from carboxy-S-adenosyl-L-methionine (Cx-SAM) to 5-hydroxyuridine (ho5U) to form 5-carboxymethoxyuridine (cmo5U) at position 34 in tRNAs. The sequence is that of tRNA U34 carboxymethyltransferase from Pseudomonas aeruginosa (strain ATCC 15692 / DSM 22644 / CIP 104116 / JCM 14847 / LMG 12228 / 1C / PRS 101 / PAO1).